A 508-amino-acid polypeptide reads, in one-letter code: Photosystem II CP47 reaction center protein (508 aa).

A run of 6 helical transmembrane segments spans residues 21–36 (SVHIMHTALVAGWAGS), 101–115 (IVFSGLCFLAAIWHW), 140–156 (GIHLFLSGVACFGFGAF), 203–218 (IAAGTLGILAGLFHLS), 237–252 (VLSSSIAAVFFAAFVV), and 457–472 (SFALLFFFGHIWHGAR).

This sequence belongs to the PsbB/PsbC family. PsbB subfamily. PSII is composed of 1 copy each of membrane proteins PsbA, PsbB, PsbC, PsbD, PsbE, PsbF, PsbH, PsbI, PsbJ, PsbK, PsbL, PsbM, PsbT, PsbX, PsbY, PsbZ, Psb30/Ycf12, at least 3 peripheral proteins of the oxygen-evolving complex and a large number of cofactors. It forms dimeric complexes. Requires Binds multiple chlorophylls. PSII binds additional chlorophylls, carotenoids and specific lipids. as cofactor.

The protein resides in the plastid. It localises to the chloroplast thylakoid membrane. Functionally, one of the components of the core complex of photosystem II (PSII). It binds chlorophyll and helps catalyze the primary light-induced photochemical processes of PSII. PSII is a light-driven water:plastoquinone oxidoreductase, using light energy to abstract electrons from H(2)O, generating O(2) and a proton gradient subsequently used for ATP formation. In Gossypium barbadense (Sea Island cotton), this protein is Photosystem II CP47 reaction center protein.